A 464-amino-acid polypeptide reads, in one-letter code: Ubiquinone biosynthesis monooxygenase COQ6, mitochondrial (464 aa).

The N-terminal 24 residues, Met-1–Leu-24, are a transit peptide targeting the mitochondrion.

The protein belongs to the UbiH/COQ6 family. In terms of assembly, component of a multi-subunit COQ enzyme complex, composed of at least coq3, coq4, coq5, coq6, coq7 and coq9. Interacts with coq8b and coq7. FAD serves as cofactor.

The protein resides in the mitochondrion inner membrane. Its subcellular location is the golgi apparatus. It is found in the cell projection. The catalysed reaction is a 4-hydroxy-3-(all-trans-polyprenyl)benzoate + 2 reduced [2Fe-2S]-[ferredoxin] + O2 + 2 H(+) = a 3,4-dihydroxy-5-(all-trans-polyprenyl)benzoate + 2 oxidized [2Fe-2S]-[ferredoxin] + H2O. It catalyses the reaction a 2-methoxy-6-(all-trans-polyprenyl)phenol + 2 reduced [2Fe-2S]-[ferredoxin] + O2 + 2 H(+) = a 2-methoxy-6-(all-trans-polyprenyl)benzene-1,4-diol + 2 oxidized [2Fe-2S]-[ferredoxin] + H2O. The protein operates within cofactor biosynthesis; ubiquinone biosynthesis. In terms of biological role, FAD-dependent monooxygenase required for two non-consecutive steps during ubiquinone biosynthesis. Required for the C5-ring hydroxylation during ubiquinone biosynthesis by catalyzing the hydroxylation of 4-hydroxy-3-(all-trans-polyprenyl)benzoic acid to 3,4-dihydroxy-5-(all-trans-polyprenyl)benzoic acid. Also acts downstream of coq4, for the C1-hydroxylation during ubiquinone biosynthesis by catalyzing the hydroxylation of 2-methoxy-6-(all-trans-polyprenyl)phenol to 2-methoxy-6-(all-trans-polyprenyl)benzene-1,4-diol. The electrons required for the hydroxylation reaction are funneled indirectly to coq6 from NADPH via a ferredoxin/ferredoxin reductase system. The protein is Ubiquinone biosynthesis monooxygenase COQ6, mitochondrial of Xenopus tropicalis (Western clawed frog).